Consider the following 153-residue polypeptide: UPF0756 membrane protein BCQ_4399 (153 aa).

4 consecutive transmembrane segments (helical) span residues 8-28 (FLFILLIIGLIAKNQSLTVAI), 54-74 (LGVTVITIAVLVPIATGEIGF), 87-107 (WIALASGVAVALLAKGGVQLL), and 117-137 (LVFGTIIAVALFNGVAVGPLI).

It belongs to the UPF0756 family.

It is found in the cell membrane. The polypeptide is UPF0756 membrane protein BCQ_4399 (Bacillus cereus (strain Q1)).